The chain runs to 543 residues: CTP synthase (543 aa).

Residues 1 to 265 (MARYIFITGG…DDEVLAAFGI (265 aa)) form an amidoligase domain region. S13 contacts CTP. Position 13 (S13) interacts with UTP. 14-19 (SLGKGL) contacts ATP. An L-glutamine-binding site is contributed by Y54. D71 is a binding site for ATP. 2 residues coordinate Mg(2+): D71 and E139. Residues 146 to 148 (DIE), 186 to 191 (KTKPTQ), and K222 each bind CTP. Residues 186–191 (KTKPTQ) and K222 contribute to the UTP site. Position 238 to 240 (238 to 240 (RDV)) interacts with ATP. The Glutamine amidotransferase type-1 domain maps to 291–542 (TIAIVGKYTG…IQAAMVQSRL (252 aa)). An L-glutamine-binding site is contributed by G353. C380 serves as the catalytic Nucleophile; for glutamine hydrolysis. L-glutamine is bound by residues 381–384 (FGMQ), E404, and R470. Residues H515 and E517 contribute to the active site.

This sequence belongs to the CTP synthase family. In terms of assembly, homotetramer.

It catalyses the reaction UTP + L-glutamine + ATP + H2O = CTP + L-glutamate + ADP + phosphate + 2 H(+). It carries out the reaction L-glutamine + H2O = L-glutamate + NH4(+). The enzyme catalyses UTP + NH4(+) + ATP = CTP + ADP + phosphate + 2 H(+). It functions in the pathway pyrimidine metabolism; CTP biosynthesis via de novo pathway; CTP from UDP: step 2/2. Allosterically activated by GTP, when glutamine is the substrate; GTP has no effect on the reaction when ammonia is the substrate. The allosteric effector GTP functions by stabilizing the protein conformation that binds the tetrahedral intermediate(s) formed during glutamine hydrolysis. Inhibited by the product CTP, via allosteric rather than competitive inhibition. Its function is as follows. Catalyzes the ATP-dependent amination of UTP to CTP with either L-glutamine or ammonia as the source of nitrogen. Regulates intracellular CTP levels through interactions with the four ribonucleotide triphosphates. This is CTP synthase from Bradyrhizobium diazoefficiens (strain JCM 10833 / BCRC 13528 / IAM 13628 / NBRC 14792 / USDA 110).